Reading from the N-terminus, the 123-residue chain is Urotensin-2 (123 aa).

An N-terminal signal peptide occupies residues 1–20 (MDRVPFCCLLFIGLLNPLLS). 2 consecutive propeptides follow at residues 21–104 (LPVT…LART) and 107–109 (QHK). A disordered region spans residues 57 to 88 (RQTMGTEAGESPGEAGPSTETPTPRGSMRKAF). An intrachain disulfide couples Cys-117 to Cys-122.

This sequence belongs to the urotensin-2 family. In terms of tissue distribution, brain specific. Predominantly expressed in motoneurons of the brainstem and spinal cord.

It localises to the secreted. In terms of biological role, highly potent vasoconstrictor. In Mus musculus (Mouse), this protein is Urotensin-2 (Uts2).